The chain runs to 145 residues: Large ribosomal subunit protein uL13 (145 aa).

It belongs to the universal ribosomal protein uL13 family. Part of the 50S ribosomal subunit.

In terms of biological role, this protein is one of the early assembly proteins of the 50S ribosomal subunit, although it is not seen to bind rRNA by itself. It is important during the early stages of 50S assembly. This chain is Large ribosomal subunit protein uL13, found in Bacillus cereus (strain ZK / E33L).